Consider the following 320-residue polypeptide: 3'-5' exoribonuclease YhaM (320 aa).

The OB DNA-binding region spans 18–90 (FLIKSATKAV…QLKIGSIRPT (73 aa)). Residues 163 to 279 (HVVCMLNVAK…LHMIDNIDAK (117 aa)) enclose the HD domain.

This sequence belongs to the YhaM family.

Functionally, shows a 3'-5' exoribonuclease activity. The chain is 3'-5' exoribonuclease YhaM from Halalkalibacterium halodurans (strain ATCC BAA-125 / DSM 18197 / FERM 7344 / JCM 9153 / C-125) (Bacillus halodurans).